The primary structure comprises 325 residues: Interleukin-10 receptor subunit beta (325 aa).

Positions Met-1–Gly-19 are cleaved as a signal peptide. Residues Met-20–Ser-220 are Extracellular-facing. 2 consecutive Fibronectin type-III domains span residues Pro-23–Thr-111 and Gly-114–Glu-216. N-linked (GlcNAc...) asparagine glycosylation is found at Asn-49, Asn-68, Asn-102, and Asn-161. Cys-66 and Cys-74 are oxidised to a cystine. A disulfide bond links Cys-188 and Cys-209. A helical transmembrane segment spans residues Trp-221–Phe-242. At Ala-243–Ser-325 the chain is on the cytoplasmic side. The interval Asp-301–Ser-325 is disordered. Over residues Gly-305–Leu-315 the composition is skewed to polar residues.

Belongs to the type II cytokine receptor family. In terms of assembly, heterodimer with IFNLR1.

Its subcellular location is the membrane. Functionally, shared cell surface receptor required for the activation of five class 2 cytokines: IL10, IL22, IL26, IL28, and IFNL1. The IFNLR1/IL10RB dimer is a receptor for the cytokine ligands IFNL2 and IFNL3 and mediates their antiviral activity. The ligand/receptor complex stimulate the activation of the JAK/STAT signaling pathway leading to the expression of IFN-stimulated genes (ISG), which contribute to the antiviral state. The protein is Interleukin-10 receptor subunit beta (IL10RB) of Homo sapiens (Human).